A 321-amino-acid polypeptide reads, in one-letter code: Probable pectate lyase A (321 aa).

An N-terminal signal peptide occupies residues 1–18 (MKFVATLIACGLSGLALA). N-linked (GlcNAc...) asparagine glycosylation is present at N93. 3 residues coordinate Ca(2+): D134, D163, and D167. The active site involves R220. Residue N238 is glycosylated (N-linked (GlcNAc...) asparagine).

The protein belongs to the polysaccharide lyase 1 family. The cofactor is Ca(2+).

The protein localises to the secreted. The catalysed reaction is Eliminative cleavage of (1-&gt;4)-alpha-D-galacturonan to give oligosaccharides with 4-deoxy-alpha-D-galact-4-enuronosyl groups at their non-reducing ends.. Its function is as follows. Pectinolytic enzyme consist of four classes of enzymes: pectin lyase, polygalacturonase, pectin methylesterase and rhamnogalacturonase. Among pectinolytic enzymes, pectin lyase is the most important in depolymerization of pectin, since it cleaves internal glycosidic bonds of highly methylated pectins. Favors pectate, the anion, over pectin, the methyl ester. In Aspergillus fumigatus (strain CBS 144.89 / FGSC A1163 / CEA10) (Neosartorya fumigata), this protein is Probable pectate lyase A (plyA).